The following is a 523-amino-acid chain: UDP-glucuronosyltransferase 2B16 (523 aa).

A signal peptide spans 1–16 (LLLLLQLSCCFSSGSC). Lys129 is modified (N6-succinyllysine). N-linked (GlcNAc...) asparagine glycosylation occurs at Asn309. A helical transmembrane segment spans residues 487–503 (VIGFLLACLTITTYLVI).

This sequence belongs to the UDP-glycosyltransferase family.

Its subcellular location is the microsome membrane. It localises to the endoplasmic reticulum membrane. It catalyses the reaction glucuronate acceptor + UDP-alpha-D-glucuronate = acceptor beta-D-glucuronoside + UDP + H(+). Functionally, UDPGT is of major importance in the conjugation and subsequent elimination of potentially toxic xenobiotics and endogenous compounds. Acts on small phenolic agents such as 2-beta-naphthol and 4-methylumbelliferone as well as bulky phenolic compounds like 2-hydroxy- and 4-hydroxybiphenyl. In contrast to 2B13 it is active toward 4-hydroxyesterone. The protein is UDP-glucuronosyltransferase 2B16 (UGT2B16) of Oryctolagus cuniculus (Rabbit).